Here is a 254-residue protein sequence, read N- to C-terminus: Bax inhibitor 1 homolog (254 aa).

The Cytoplasmic portion of the chain corresponds to 1 to 43 (MASTSNRNFFSSNMTQIPMDEKIRIALQFNNLSQSTKQTLTKV). Residues 44-64 (YCALAIGILTATVGVLFSMFI) form a helical membrane-spanning segment. Residues 65-66 (YR) lie on the Lumenal side of the membrane. Residues 67–87 (PGFLMTLLLVIGSAILFATTP) form a helical membrane-spanning segment. Over 88–98 (RTQDYKTQVKR) the chain is Cytoplasmic. Residues 99–119 (FTLFNLVTFVTGMSSSGLIEL) form a helical membrane-spanning segment. At 120–126 (YMDINSS) the chain is on the lumenal side. Residues 127-147 (IVLNAFMATCGIFISFTLFSL) traverse the membrane as a helical segment. The Cytoplasmic segment spans residues 148-152 (LTNKR). The chain crosses the membrane as a helical span at residues 153-173 (LYIFIGSSLASLSIGIFVLAL). At 174-187 (TRLFGGYSEPLDQL) the chain is on the lumenal side. A helical membrane pass occupies residues 188–208 (FILAILASSVLFIIFDTQIMV). At 209–217 (HRIENLGEK) the chain is on the cytoplasmic side. Positions 218–238 (DVLFHAFILFYDFVDLFRVIL) form an intramembrane region, helical. Residues 239–254 (KILAKKENKNNNKSRR) lie on the Cytoplasmic side of the membrane.

It belongs to the BI1 family.

It is found in the endoplasmic reticulum membrane. The polypeptide is Bax inhibitor 1 homolog (Dictyostelium discoideum (Social amoeba)).